The following is a 198-amino-acid chain: MLLFVGLGNPGKAYSANRHNIGFMAIDAIAREYGAPAFRARFQGLTSEITLSGEKIVLLKPETYMNESGRSVSDAVHFYKIDASRVIVFHDELDLAPGKVRVKKGGGNAGHNGLKSITQHITNDYRRVRIGIGHPGIKDMVRHYVLGDFSKTESAWVETLCLSIAVNAPLLAKGEDENFQNKIFHAMETAGLAKDGLF.

Position 14 (Tyr-14) interacts with tRNA. His-19 acts as the Proton acceptor in catalysis. 3 residues coordinate tRNA: Tyr-64, Asn-66, and Asn-112.

The protein belongs to the PTH family. In terms of assembly, monomer.

Its subcellular location is the cytoplasm. The catalysed reaction is an N-acyl-L-alpha-aminoacyl-tRNA + H2O = an N-acyl-L-amino acid + a tRNA + H(+). Hydrolyzes ribosome-free peptidyl-tRNAs (with 1 or more amino acids incorporated), which drop off the ribosome during protein synthesis, or as a result of ribosome stalling. In terms of biological role, catalyzes the release of premature peptidyl moieties from peptidyl-tRNA molecules trapped in stalled 50S ribosomal subunits, and thus maintains levels of free tRNAs and 50S ribosomes. This chain is Peptidyl-tRNA hydrolase, found in Beijerinckia indica subsp. indica (strain ATCC 9039 / DSM 1715 / NCIMB 8712).